A 372-amino-acid chain; its full sequence is Protein phosphatase 1 regulatory subunit 42 (372 aa).

7 LRR repeats span residues 30–51, 52–71, 72–93, 94–115, 116–137, 146–167, and 168–189; these read RITHLNFSNKNIDEVEDLTMCR, NLTVLYLYDNNINQIKNLGS, NLTHLYLQNNCISCIENLSGLK, RLEKLYLGGNCLTVVEGLEGLR, ELRELHIENQRLPPGEKLLFDP, SLSVLNISNNNIDELKDLAVLE, and NLTQFVAADNQLKEIKDLEFVL. Residues 203–241 enclose the LRRCT domain; the sequence is NPVCLKPKYREKVTIISKTLEILDGKEIKEMARQFLLNW.

The protein localises to the cytoplasm. It is found in the cytoskeleton. It localises to the microtubule organizing center. Its subcellular location is the centrosome. Functionally, may regulate phosphatase activity of protein phosphatase 1 (PP1) complexes. The sequence is that of Protein phosphatase 1 regulatory subunit 42 (ppp1r42) from Xenopus laevis (African clawed frog).